Reading from the N-terminus, the 323-residue chain is Sphingolipid delta(4)-desaturase/C4-monooxygenase DES2 (323 aa).

G2 carries the N-myristoyl glycine lipid modification. The next 2 membrane-spanning stretches (helical) occupy residues P41–V61 and W68–I88. Residues H89–H93 carry the Histidine box-1 motif. The tract at residues T95–T99 is required for C4-hydroxylase activity. The short motif at H128 to H132 is the Histidine box-2 element. Residues I200 to L220 traverse the membrane as a helical segment. The Histidine box-3 signature appears at H259–H263.

Belongs to the fatty acid desaturase type 1 family. DEGS subfamily.

It is found in the endoplasmic reticulum membrane. It catalyses the reaction a dihydroceramide + 2 Fe(II)-[cytochrome b5] + O2 + 2 H(+) = a phytoceramide + 2 Fe(III)-[cytochrome b5] + H2O. It carries out the reaction an N-acylsphinganine + 2 Fe(II)-[cytochrome b5] + O2 + 2 H(+) = an N-acylsphing-4-enine + 2 Fe(III)-[cytochrome b5] + 2 H2O. The catalysed reaction is N-octanoylsphinganine + 2 Fe(II)-[cytochrome b5] + O2 + 2 H(+) = N-octanoyl-4-hydroxysphinganine + 2 Fe(III)-[cytochrome b5] + H2O. The enzyme catalyses an N-acylsphinganine + 2 Fe(II)-[cytochrome b5] + O2 + 2 H(+) = an N-acyl-(4R)-4-hydroxysphinganine + 2 Fe(III)-[cytochrome b5] + H2O. It functions in the pathway membrane lipid metabolism; sphingolipid biosynthesis. Bifunctional enzyme which acts both as a sphingolipid delta(4)-desaturase and a sphingolipid C4-monooxygenase. The sequence is that of Sphingolipid delta(4)-desaturase/C4-monooxygenase DES2 from Rattus norvegicus (Rat).